Consider the following 69-residue polypeptide: Beta-defensin 43 (69 aa).

A signal peptide spans 1–22; sequence MRVLFSILGVLTLLSIVPLARS. Intrachain disulfides connect Cys-29-Cys-56 and Cys-35-Cys-49.

It belongs to the beta-defensin family.

It is found in the secreted. Has bactericidal activity. In Mus musculus (Mouse), this protein is Beta-defensin 43 (Defb43).